Here is a 241-residue protein sequence, read N- to C-terminus: Uracil-DNA glycosylase (241 aa).

Asp-68 (proton acceptor) is an active-site residue.

The protein belongs to the uracil-DNA glycosylase (UDG) superfamily. UNG family.

It is found in the cytoplasm. The enzyme catalyses Hydrolyzes single-stranded DNA or mismatched double-stranded DNA and polynucleotides, releasing free uracil.. Functionally, excises uracil residues from the DNA which can arise as a result of misincorporation of dUMP residues by DNA polymerase or due to deamination of cytosine. This Rhizobium meliloti (strain 1021) (Ensifer meliloti) protein is Uracil-DNA glycosylase.